Here is a 288-residue protein sequence, read N- to C-terminus: Polyamine aminopropyltransferase (288 aa).

The PABS domain occupies 9 to 242 (SGWLDEYHQG…GLWSWAFASM (234 aa)). Gln-36 contacts S-methyl-5'-thioadenosine. Residues His-67 and Asp-91 each coordinate spermidine. S-methyl-5'-thioadenosine-binding positions include Glu-111 and 143 to 144 (NG). Asp-162 functions as the Proton acceptor in the catalytic mechanism. Pro-169 is a binding site for S-methyl-5'-thioadenosine.

Belongs to the spermidine/spermine synthase family. Homodimer or homotetramer.

The protein resides in the cytoplasm. It carries out the reaction S-adenosyl 3-(methylsulfanyl)propylamine + putrescine = S-methyl-5'-thioadenosine + spermidine + H(+). Its pathway is amine and polyamine biosynthesis; spermidine biosynthesis; spermidine from putrescine: step 1/1. Functionally, catalyzes the irreversible transfer of a propylamine group from the amino donor S-adenosylmethioninamine (decarboxy-AdoMet) to putrescine (1,4-diaminobutane) to yield spermidine. The protein is Polyamine aminopropyltransferase of Prochlorococcus marinus (strain NATL1A).